A 785-amino-acid chain; its full sequence is Protein SEY1 (785 aa).

Residues 1-31 form a disordered region; sequence MASAAPINLRAQDTPYVPPTSLPTSSSQTGS. At 1-689 the chain is on the cytoplasmic side; sequence MASAAPINLR…KRSTVASIAQ (689 aa). Positions 22 to 31 are enriched in low complexity; it reads LPTSSSQTGS. Residues 61-281 enclose the GB1/RHD3-type G domain; it reads GFSYNIVAVF…SSDYLFKPAY (221 aa). 71-78 contacts GTP; that stretch reads GSQSTGKS. A coiled-coil region spans residues 458 to 482; sequence SWEEELELLRDEIRAVADQCRKDET. Residues 690-710 form a helical membrane-spanning segment; that stretch reads IPYWIYGVLVVLGWNEAMLVL. Topologically, residues 711 to 713 are lumenal; sequence FNP. Residues 714–734 traverse the membrane as a helical segment; sequence LYFAFLLLAMATSYIIAQLGL. Topologically, residues 735–785 are cytoplasmic; the sequence is VGPLFQVTRTVGSEIQRQATARLREHFSQPVLAEPVQVGPSRDREEVGQIQ.

Belongs to the TRAFAC class dynamin-like GTPase superfamily. GB1/RHD3 GTPase family. RHD3 subfamily.

The protein resides in the endoplasmic reticulum membrane. In terms of biological role, cooperates with the reticulon proteins and tubule-shaping DP1 family proteins to generate and maintain the structure of the tubular endoplasmic reticulum network. Has GTPase activity, which is required for its function in ER organization. In Laccaria bicolor (strain S238N-H82 / ATCC MYA-4686) (Bicoloured deceiver), this protein is Protein SEY1.